The sequence spans 283 residues: MAVPAFSDIAKSANDLLNKDFYHLAAGTIEVKSNTPNNVAFKVTGKSTHDKVTSGALEGKFTDKPNGLTVTQTWNTANALETKVEMADNLAKGLKAEGIFSFLPATNARGAKFNLHFKQSNFHGRAFFDLLKGPTANIDAIVGHEGFLAGASAGYDVQKAAITGYSAAVGYHAPTYSAAITATDNLSVFSASYYHKVNSQVEAGSKATWNSKTGNTVGLEVATKYRIDPVSFVKGKINDRGVAAIAYNVLLREGVTLGVGASFDTQKLDQATHKVGTSFTFES.

Belongs to the eukaryotic mitochondrial porin family.

Its subcellular location is the mitochondrion outer membrane. In terms of biological role, forms a channel through the cell membrane that allows diffusion of small hydrophilic molecules. The channel adopts an open conformation at low or zero membrane potential and a closed conformation at potentials above 30-40 mV. The open state has a weak anion selectivity whereas the closed state is cation-selective. This Neurospora crassa (strain ATCC 24698 / 74-OR23-1A / CBS 708.71 / DSM 1257 / FGSC 987) protein is Mitochondrial outer membrane protein porin.